The sequence spans 76 residues: Conotoxin Cl6.4 (76 aa).

The N-terminal stretch at 1-19 (MTLTFLLVVALCMLTTCHT) is a signal peptide. A propeptide spanning residues 20-47 (ENYRDSQKVSPVRSIGKTQFARSLRLSE) is cleaved from the precursor. Intrachain disulfides connect Cys50–Cys66, Cys57–Cys70, and Cys65–Cys75.

Expressed by the venom duct.

The protein localises to the secreted. The chain is Conotoxin Cl6.4 from Californiconus californicus (California cone).